The primary structure comprises 262 residues: Ribosomal RNA small subunit methyltransferase A (262 aa).

The S-adenosyl-L-methionine site is built by histidine 16, leucine 18, glycine 43, glutamate 64, aspartate 89, and asparagine 109.

This sequence belongs to the class I-like SAM-binding methyltransferase superfamily. rRNA adenine N(6)-methyltransferase family. RsmA subfamily.

The protein localises to the cytoplasm. The catalysed reaction is adenosine(1518)/adenosine(1519) in 16S rRNA + 4 S-adenosyl-L-methionine = N(6)-dimethyladenosine(1518)/N(6)-dimethyladenosine(1519) in 16S rRNA + 4 S-adenosyl-L-homocysteine + 4 H(+). Its function is as follows. Specifically dimethylates two adjacent adenosines (A1518 and A1519) in the loop of a conserved hairpin near the 3'-end of 16S rRNA in the 30S particle. May play a critical role in biogenesis of 30S subunits. The protein is Ribosomal RNA small subunit methyltransferase A of Xanthomonas campestris pv. campestris (strain 8004).